The chain runs to 297 residues: Mitochondrial citrate transporter A (297 aa).

Solcar repeat units follow at residues 12–91 (PSSL…LKSL), 102–188 (PKTV…LKQM), and 199–286 (LGTA…TMDA). 6 consecutive transmembrane segments (helical) span residues 18-31 (IIAGSTAGAVEIAI), 61-81 (SQWYAGCTTLIIGNSLKAGIR), 99-119 (ISGPKTVIAGFGAGFTESLLA), 160-180 (FFQGFVPTTARQAANSATRFS), 192-212 (YVAPGEKLGTASTFALGGIAG), and 251-272 (KDEGIFTFWSGAVPRLARLIMS).

Belongs to the mitochondrial carrier (TC 2.A.29) family.

It is found in the mitochondrion inner membrane. It catalyses the reaction citrate(in) + H(+)(in) = citrate(out) + H(+)(out). Functionally, mitochondrial transporter that mediates citrate export from mitochondria to cytoplasm. Both ctpA, ctpB, and ctpD play important roles in citric acid transport across the mitochondrial membrane and function in a redundant manner. The polypeptide is Mitochondrial citrate transporter A (Aspergillus niger (strain ATCC 1015 / CBS 113.46 / FGSC A1144 / LSHB Ac4 / NCTC 3858a / NRRL 328 / USDA 3528.7)).